A 412-amino-acid chain; its full sequence is MAAALLARARGPLRRALGVRDWRRLHTVYQSVELPETHQMLRQTCRDFAEKELVPIAAQLDREHLFPTAQVKKMGELGLLAMDVPEELSGAGLDYLAYSIALEEISRACASTGVIMSVNNSLYLGPILKFGSAQQKQQWITPFTNGDKIGCFALSEPGNGSDAGAASTTAREEGDSWVLNGTKAWITNSWEASATVVFASTDRSRQNKGISAFLVPMPTPGLTLGKKEDKLGIRASSTANLIFEDCRIPKENLLGEPGMGFKIAMQTLDMGRIGIASQALGIAQASLDCAVKYAENRNAFGAPLTKLQNIQFKLADMALALESARLLTWRAAMLKDNKKPFTKESAMAKLAASEAATAISHQAIQILGGMGYVTEMPAERYYRDARITEIYEGTSEIQRLVIAGHLLRSYRS.

Residues 1–24 (MAAALLARARGPLRRALGVRDWRR) constitute a mitochondrion transit peptide. At Thr-27 the chain carries Phosphothreonine. Lys-51 is subject to N6-acetyllysine; alternate. Residue Lys-51 is modified to N6-succinyllysine; alternate. Residue Lys-72 is modified to N6-acetyllysine. An N6-acetyllysine; alternate modification is found at Lys-129. Lys-129 bears the N6-succinyllysine; alternate mark. Residues 152-161 (FALSEPGNGS) and 185-187 (WIT) contribute to the FAD site. Ser-161 contacts substrate. Position 208 is an N6-acetyllysine (Lys-208). The residue at position 262 (Lys-262) is an N6-acetyllysine; alternate. Lys-262 carries the N6-succinyllysine; alternate modification. 269–272 (DMGR) lines the substrate pocket. Lys-292 carries the post-translational modification N6-acetyllysine. FAD is bound at residue Arg-297. Lys-306 bears the N6-acetyllysine; alternate mark. Residue Lys-306 is modified to N6-succinyllysine; alternate. FAD-binding positions include Gln-308 and 365–369 (QILGG). The active-site Proton acceptor is Glu-392. Gly-393 is a binding site for substrate. 394–396 (TSE) lines the FAD pocket.

It belongs to the acyl-CoA dehydrogenase family. In terms of assembly, homotetramer. The cofactor is FAD.

Its subcellular location is the mitochondrion matrix. The catalysed reaction is a short-chain 2,3-saturated fatty acyl-CoA + oxidized [electron-transfer flavoprotein] + H(+) = a short-chain (2E)-enoyl-CoA + reduced [electron-transfer flavoprotein]. It catalyses the reaction butanoyl-CoA + oxidized [electron-transfer flavoprotein] + H(+) = (2E)-butenoyl-CoA + reduced [electron-transfer flavoprotein]. It carries out the reaction pentanoyl-CoA + oxidized [electron-transfer flavoprotein] + H(+) = (2E)-pentenoyl-CoA + reduced [electron-transfer flavoprotein]. The enzyme catalyses hexanoyl-CoA + oxidized [electron-transfer flavoprotein] + H(+) = (2E)-hexenoyl-CoA + reduced [electron-transfer flavoprotein]. It participates in lipid metabolism; mitochondrial fatty acid beta-oxidation. Short-chain specific acyl-CoA dehydrogenase is one of the acyl-CoA dehydrogenases that catalyze the first step of mitochondrial fatty acid beta-oxidation, an aerobic process breaking down fatty acids into acetyl-CoA and allowing the production of energy from fats. The first step of fatty acid beta-oxidation consists in the removal of one hydrogen from C-2 and C-3 of the straight-chain fatty acyl-CoA thioester, resulting in the formation of trans-2-enoyl-CoA. Among the different mitochondrial acyl-CoA dehydrogenases, short-chain specific acyl-CoA dehydrogenase acts specifically on acyl-CoAs with saturated 4 to 6 carbons long primary chains. The sequence is that of Short-chain specific acyl-CoA dehydrogenase, mitochondrial (Acads) from Mus musculus (Mouse).